The primary structure comprises 512 residues: Probable capsid protein 4 (512 aa).

Belongs to the NCLDV major capsid protein family.

It is found in the virion. The protein is Probable capsid protein 4 of Acanthamoeba polyphaga mimivirus (APMV).